Here is a 103-residue protein sequence, read N- to C-terminus: Large ribosomal subunit protein bL21 (103 aa).

The protein belongs to the bacterial ribosomal protein bL21 family. As to quaternary structure, part of the 50S ribosomal subunit. Contacts protein L20.

Its function is as follows. This protein binds to 23S rRNA in the presence of protein L20. The sequence is that of Large ribosomal subunit protein bL21 from Glaesserella parasuis serovar 5 (strain SH0165) (Haemophilus parasuis).